Here is a 311-residue protein sequence, read N- to C-terminus: Thioredoxin reductase (311 aa).

33 to 43 (EGFFSGISGGQ) contacts FAD. An intrachain disulfide couples Cys-138 to Cys-141. 283–292 (DVQDKYYRQA) provides a ligand contact to FAD.

This sequence belongs to the class-II pyridine nucleotide-disulfide oxidoreductase family. Homodimer. The cofactor is FAD.

It localises to the cytoplasm. The catalysed reaction is [thioredoxin]-dithiol + NADP(+) = [thioredoxin]-disulfide + NADPH + H(+). This is Thioredoxin reductase (trxB) from Chlamydia pneumoniae (Chlamydophila pneumoniae).